Reading from the N-terminus, the 771-residue chain is Endoplasmin homolog (771 aa).

The first 24 residues, 1–24 (MANSSLLRVVLVALLLLGSVTVSA), serve as a signal peptide directing secretion. Residues Asn63, Asp109, and Phe160 each coordinate ATP. N-linked (GlcNAc...) asparagine glycosylation occurs at Asn63. A disordered region spans residues 254 to 282 (AATPESAAEERSLDEGAVEEDPDKEGDTQ). 2 N-linked (GlcNAc...) asparagine glycosylation sites follow: Asn306 and Asn402. The disordered stretch occupies residues 727 to 771 (ADDSLLPPDDAEYTVSDTETEEEEEQPKVDTNAHEEAETDGEGDL). The segment covering 752 to 762 (QPKVDTNAHEE) has biased composition (basic and acidic residues). The Prevents secretion from ER signature appears at 768–771 (EGDL).

Belongs to the heat shock protein 90 family. In terms of assembly, homotetramer.

The protein localises to the endoplasmic reticulum. Molecular chaperone that functions in the processing and transport of secreted proteins. Required for the synthesis of lipophosphoglycan (LPG), a cell surface glycoconjugate. Necessary for the attachment of the galactosyl residue to the mannose within the phosphoglycan repeats of the nascent LPG chain. Also required for addition of phosphoglycan to acid phosphatase. Not required for normal growth. Has ATPase activity. Binds heparin with micromolar affinity which may facilitate infection of host cells. The sequence is that of Endoplasmin homolog from Leishmania donovani.